The primary structure comprises 471 residues: FERM domain-containing protein 8 (471 aa).

Disordered regions lie at residues methionine 1 to valine 23, alanine 381 to asparagine 416, and threonine 451 to glycine 471. One can recognise an FERM domain in the interval glutamine 31–alanine 382.

Its subcellular location is the cytoplasm. It is found in the cytosol. The protein resides in the cell membrane. Functionally, promotes the cell surface stability of rhomboid 5 homologs and prevents their degradation via the endolysosomal pathway. By acting on rhomboid 5 homologs, involved in ADAM17-mediated ligand shedding. Negatively regulates the Wnt/beta-catenin signaling pathway. The sequence is that of FERM domain-containing protein 8 (frmd8) from Danio rerio (Zebrafish).